The chain runs to 392 residues: Formate-dependent phosphoribosylglycinamide formyltransferase (392 aa).

Residues 20–21 (EL) and Glu-80 contribute to the N(1)-(5-phospho-beta-D-ribosyl)glycinamide site. ATP contacts are provided by residues Arg-112, Lys-153, 158–163 (SSGKGQ), 193–196 (EEFI), and Glu-201. The region spanning 117-306 (RLAAEELGLP…EFELHVRAIL (190 aa)) is the ATP-grasp domain. 2 residues coordinate Mg(2+): Glu-265 and Glu-277. Residues Asp-284, Lys-354, and 361-362 (RR) each bind N(1)-(5-phospho-beta-D-ribosyl)glycinamide.

This sequence belongs to the PurK/PurT family. As to quaternary structure, homodimer.

The enzyme catalyses N(1)-(5-phospho-beta-D-ribosyl)glycinamide + formate + ATP = N(2)-formyl-N(1)-(5-phospho-beta-D-ribosyl)glycinamide + ADP + phosphate + H(+). It functions in the pathway purine metabolism; IMP biosynthesis via de novo pathway; N(2)-formyl-N(1)-(5-phospho-D-ribosyl)glycinamide from N(1)-(5-phospho-D-ribosyl)glycinamide (formate route): step 1/1. Its function is as follows. Involved in the de novo purine biosynthesis. Catalyzes the transfer of formate to 5-phospho-ribosyl-glycinamide (GAR), producing 5-phospho-ribosyl-N-formylglycinamide (FGAR). Formate is provided by PurU via hydrolysis of 10-formyl-tetrahydrofolate. This is Formate-dependent phosphoribosylglycinamide formyltransferase from Geobacter metallireducens (strain ATCC 53774 / DSM 7210 / GS-15).